The following is a 361-amino-acid chain: 3-dehydroquinate synthase (361 aa).

NAD(+) is bound by residues glycine 104–aspartate 108, threonine 128–threonine 129, lysine 140, and lysine 149. Residues glutamate 182, histidine 245, and histidine 262 each coordinate Zn(2+).

It belongs to the sugar phosphate cyclases superfamily. Dehydroquinate synthase family. NAD(+) serves as cofactor. Requires Co(2+) as cofactor. It depends on Zn(2+) as a cofactor.

It is found in the cytoplasm. It carries out the reaction 7-phospho-2-dehydro-3-deoxy-D-arabino-heptonate = 3-dehydroquinate + phosphate. It participates in metabolic intermediate biosynthesis; chorismate biosynthesis; chorismate from D-erythrose 4-phosphate and phosphoenolpyruvate: step 2/7. In terms of biological role, catalyzes the conversion of 3-deoxy-D-arabino-heptulosonate 7-phosphate (DAHP) to dehydroquinate (DHQ). This chain is 3-dehydroquinate synthase, found in Halalkalibacterium halodurans (strain ATCC BAA-125 / DSM 18197 / FERM 7344 / JCM 9153 / C-125) (Bacillus halodurans).